The following is a 481-amino-acid chain: 3-isopropylmalate dehydratase large subunit (481 aa).

[4Fe-4S] cluster-binding residues include cysteine 357, cysteine 417, and cysteine 420.

The protein belongs to the aconitase/IPM isomerase family. LeuC type 1 subfamily. As to quaternary structure, heterodimer of LeuC and LeuD. [4Fe-4S] cluster serves as cofactor.

The enzyme catalyses (2R,3S)-3-isopropylmalate = (2S)-2-isopropylmalate. It participates in amino-acid biosynthesis; L-leucine biosynthesis; L-leucine from 3-methyl-2-oxobutanoate: step 2/4. In terms of biological role, catalyzes the isomerization between 2-isopropylmalate and 3-isopropylmalate, via the formation of 2-isopropylmaleate. The polypeptide is 3-isopropylmalate dehydratase large subunit (Mycolicibacterium gilvum (strain PYR-GCK) (Mycobacterium gilvum (strain PYR-GCK))).